The primary structure comprises 1213 residues: A disintegrin and metalloproteinase with thrombospondin motifs 2 (1213 aa).

Residues 1–28 form the signal peptide; that stretch reads MDPPAGAARRLLCPALLLLLLPPPPLLL. The propeptide occupies 29-260; the sequence is LPPPPASVRL…INSSRRRVRR (232 aa). A glycan (N-linked (GlcNAc...) asparagine) is linked at Asn-111. Residues 211 to 232 are disordered; the sequence is YRRPPTPKPPPVSEPQALDTGV. Over residues 214–223 the composition is skewed to pro residues; sequence PPTPKPPPVS. N-linked (GlcNAc...) asparagine glycosylation is present at Asn-252. The Peptidase M12B domain maps to 267 to 471; sequence YNIEVLLGVD…HSYDCLRDDP (205 aa). Intrachain disulfides connect Cys-344/Cys-393, Cys-387/Cys-466, Cys-426/Cys-452, Cys-493/Cys-518, Cys-504/Cys-527, Cys-513/Cys-546, Cys-540/Cys-551, Cys-574/Cys-611, Cys-578/Cys-616, and Cys-589/Cys-601. His-409 is a binding site for Zn(2+). Residue Glu-410 is part of the active site. Residues His-413 and His-419 each contribute to the Zn(2+) site. Residues 480-560 enclose the Disintegrin domain; the sequence is PQLPGLHYSM…CIWLTPDILK (81 aa). The TSP type-1 1 domain maps to 561–617; it reads RDGNWGAWTPFGSCSRTCGTGVKFRTRQCDNPHPANGGRTCSGLAYDFQLCNPQDCP. Positions 692-694 match the Cell attachment site motif; the sequence is RGD. The tract at residues 723 to 851 is spacer; sequence CKVVKGTFTR…LNVDDNNVLE (129 aa). TSP type-1 domains lie at 855–913, 915–975, and 976–1030; these read VRHE…NPQE, SQPV…NREL, and CPGR…APCP. N-linked (GlcNAc...) asparagine glycosylation is found at Asn-949, Asn-950, and Asn-994. 3 disulfide bridges follow: Cys-988–Cys-1024, Cys-992–Cys-1029, and Cys-1003–Cys-1013. The N-linked (GlcNAc...) asparagine glycan is linked to Asn-1032. One can recognise a PLAC domain in the interval 1060-1098; that stretch reads SKDQCQGDKSMFCRMEVLSRYCSIPSYNKLCCKSCNPPR. Asn-1099, Asn-1147, and Asn-1152 each carry an N-linked (GlcNAc...) asparagine glycan.

As to quaternary structure, may belong to a multimeric complex. Binds specifically to collagen type XIV. Zn(2+) serves as cofactor. Post-translationally, the precursor is cleaved by a furin endopeptidase. In terms of processing, glycosylated. Can be O-fucosylated by POFUT2 on a serine or a threonine residue found within the consensus sequence C1-X(2)-(S/T)-C2-G of the TSP type-1 repeat domains where C1 and C2 are the first and second cysteine residue of the repeat, respectively. Fucosylated repeats can then be further glycosylated by the addition of a beta-1,3-glucose residue by the glucosyltransferase, B3GALTL. Fucosylation mediates the efficient secretion of ADAMTS family members. Can also be C-glycosylated with one or two mannose molecules on tryptophan residues within the consensus sequence W-X-X-W of the TPRs, and N-glycosylated. These other glycosylations can also facilitate secretion.

It localises to the secreted. The protein localises to the extracellular space. It is found in the extracellular matrix. It carries out the reaction Cleaves the N-propeptide of collagen chain alpha1(I) at Pro-|-Gln and of alpha1(II) and alpha2(I) at Ala-|-Gln.. Cleaves the propeptides of type I and II collagen prior to fibril assembly. Does not act on type III collagen. Cleaves lysyl oxidase LOX at a site downstream of its propeptide cleavage site to produce a short LOX form with reduced collagen-binding activity. The chain is A disintegrin and metalloproteinase with thrombospondin motifs 2 (Adamts2) from Mus musculus (Mouse).